The chain runs to 447 residues: MREIVHLQTGQCGNQIGAAFWQTISGEHGLDGDGQYNGTSDLQLERMNVYFNHASGDKYVPRAVLVDLEPGTMDAVRSGPFGKLFRPDNFVFGQSGAGNNWAKGHYTEGAELVDQVLDVVRREAEGCDCLQGFQITHSLGGGTGAGMGTLLISKIREEFPDRMMATFSVVPSPKVSDTVVEPYNATLSVHQLVEHSDETFCIDNEALYDICMRTLKLSQPSYGDLNHLVSAVMSGVTTSLRFPGQLNSDLRKLAVNMVPFPRLHFFMVGFAPLTSRGGSSYRQVSVPELTQQMFDPKNMMAASDFRNGRYLTCSALFRGKISMKEVEDQMRNIQNKNQSYFVEWIPNNVQTALCSVPPRGLKMSSTFVGNSTSIQELFKRVGDQFAAMFRRKAFLHWYTGEGMDEMEFTEAESNMNDLVSEYQQYQEASVSEGEEEYLAEDIVDEEV.

Residues Gln11, Glu69, Ser138, Gly142, Thr143, Gly144, Asn204, and Asn226 each contribute to the GTP site. Glu69 contacts Mg(2+).

This sequence belongs to the tubulin family. As to quaternary structure, dimer of alpha and beta chains. A typical microtubule is a hollow water-filled tube with an outer diameter of 25 nm and an inner diameter of 15 nM. Alpha-beta heterodimers associate head-to-tail to form protofilaments running lengthwise along the microtubule wall with the beta-tubulin subunit facing the microtubule plus end conferring a structural polarity. Microtubules usually have 13 protofilaments but different protofilament numbers can be found in some organisms and specialized cells. Mg(2+) is required as a cofactor.

Its subcellular location is the cytoplasm. It localises to the cytoskeleton. In terms of biological role, tubulin is the major constituent of microtubules, a cylinder consisting of laterally associated linear protofilaments composed of alpha- and beta-tubulin heterodimers. Microtubules grow by the addition of GTP-tubulin dimers to the microtubule end, where a stabilizing cap forms. Below the cap, tubulin dimers are in GDP-bound state, owing to GTPase activity of alpha-tubulin. This is Tubulin beta chain (TUB2) from Penicillium digitatum (Green mold).